Consider the following 153-residue polypeptide: MFTIDFNDHTDLVNESWYHQIEDLLNFAKEQEQINEDAELSVTFVDKNEIQEINKTYRDKDKVTDVISFALEEDEPEIVGLDMPRVLGDIIICTNVAEEQADSFGHSFERELGFLALHGFLHLLGYDHMNEEDEKVMFSRQDTILNAYGLTRD.

Zn(2+) is bound by residues His118, His122, and His128.

It belongs to the endoribonuclease YbeY family. The cofactor is Zn(2+).

The protein localises to the cytoplasm. In terms of biological role, single strand-specific metallo-endoribonuclease involved in late-stage 70S ribosome quality control and in maturation of the 3' terminus of the 16S rRNA. The sequence is that of Endoribonuclease YbeY from Staphylococcus haemolyticus (strain JCSC1435).